Consider the following 514-residue polypeptide: Probable lysine--tRNA ligase, cytoplasmic (514 aa).

The protein belongs to the class-II aminoacyl-tRNA synthetase family. In terms of assembly, homodimer.

The protein resides in the cytoplasm. It carries out the reaction tRNA(Lys) + L-lysine + ATP = L-lysyl-tRNA(Lys) + AMP + diphosphate. The polypeptide is Probable lysine--tRNA ligase, cytoplasmic (Vairimorpha ceranae (strain BRL01) (Microsporidian parasite)).